The chain runs to 1196 residues: Calcium-activated potassium channel subunit alpha-1 (1196 aa).

Residues 1–52 lie on the Extracellular side of the membrane; the sequence is MATWNASQIILNSMSNIIESPQSKPRPVMASNGASLFIPVTMEVPCDQGTRM. A helical membrane pass occupies residues 53 to 73; it reads WWAFLASSMVTFFGGLFIILV. At 74 to 146 the chain is on the cytoplasmic side; that stretch reads WRTFKYLWTV…MISAQTLTGR (73 aa). A helical transmembrane segment spans residues 147–167; the sequence is VLVVTVFALSIGALMIYFIDS. Residues 168–182 are Extracellular-facing; the sequence is SNPIESCQNFYKDFT. A helical transmembrane segment spans residues 183–203; that stretch reads LQIDMAFNIFFLLYFGLRFIA. Topologically, residues 204–207 are cytoplasmic; sequence ANDK. A helical transmembrane segment spans residues 208 to 228; that stretch reads LWFWLEVNSVVDFFTVPPVFV. Residues 229–232 lie on the Extracellular side of the membrane; that stretch reads SVYL. A helical; Voltage-sensor membrane pass occupies residues 233–253; it reads NRSWLGLRFLRALRLIQFSEI. The Cytoplasmic portion of the chain corresponds to 254-268; it reads LQFLNILKTSNSIKL. The helical transmembrane segment at 269-289 threads the bilayer; that stretch reads VNLCSIFISTWLTAAGFIHLV. Residues 290–303 are Extracellular-facing; that stretch reads ENSGDPWRNFENSQ. An intramembrane region (pore-forming) is located at residues 304 to 326; that stretch reads DLSYWECMYLLMVTMSTVGYGDV. The short motif at 320-323 is the Selectivity for potassium element; that stretch reads TVGY. The Extracellular portion of the chain corresponds to 327–335; sequence YAKTTLGRL. The helical transmembrane segment at 336 to 356 threads the bilayer; the sequence is FMVFFILGGLAMFASYVPEII. Over 357–1196 the chain is Cytoplasmic; it reads ELIGNRKKYG…PPIREVEDEC (840 aa). The region spanning 375–517 is the RCK N-terminal 1 domain; it reads RKHIVVCGHI…WNWKDGDDAI (143 aa). Positions 407, 430, and 432 each coordinate Mg(2+). A segment S7 region spans residues 524-544; sequence LGFIAQSCLAQGLSTMLANLF. Residues 581–601 are segment S8; that stretch reads LSFPAVCELCFVKLKLLMIAI. The interval 645 to 649 is heme-binding motif; the sequence is CKACH. The tract at residues 672–697 is disordered; the sequence is SALSPKKKQRNGGMRHSPNTSPNMMR. A segment S9 region spans residues 748–768; that stretch reads VLSGHVVVCIFGDMTSALIGV. The region spanning 750–894 is the RCK N-terminal 2 domain; the sequence is SGHVVVCIFG…MERSSPDNSP (145 aa). Positions 914–936 match the Calcium bowl motif; sequence TELVNDSNVQFLDQDDDDDPDTE. Gln-923, Asp-926, Asp-929, and Asp-931 together coordinate Ca(2+). The segment S10 stretch occupies residues 943–963; it reads FACGTAFAVSVLDSLMSATYF. Positions 1098–1119 are enriched in low complexity; that stretch reads ASLSHSSHSSHSSSKKSSSVTS. Residues 1098-1149 form a disordered region; sequence ASLSHSSHSSHSSSKKSSSVTSILHTASANRQNRVKARDSRDKQKMGQAEKK. Polar residues predominate over residues 1120–1129; that stretch reads ILHTASANRQ. Basic and acidic residues predominate over residues 1133-1149; it reads KARDSRDKQKMGQAEKK.

Belongs to the potassium channel family. Calcium-activated (TC 1.A.1.3) subfamily. KCa1.1/KCNMA1 sub-subfamily. Homotetramer; which constitutes the calcium-activated potassium channel. Expressed in both the somites and neural tube of 1 day embryos. Within the nervous system, it is restricted to dorsal parts, and expressed centrally in regions dedicated to processing of sensory information. Six hours later, it is expressed segmentally within the somites. At this time, it is expressed in a primary sensory organ, the trigeminal ganglion. By 2 days, it is also expressed in other primary sensory organs, such as the otic vesicle, and the eye. Within the retina, it is expressed to an internal layer. In the developing otic vesicle, it is abundantly expressed near the apical surface. Isoform 3 is neural-specific, and is only expressed during late stages of neuronal differentiation.

The protein resides in the cell membrane. The catalysed reaction is K(+)(in) = K(+)(out). With respect to regulation, ethanol and carbon monoxide-bound heme increase channel activation. Heme inhibits channel activation. Functionally, potassium channel activated by both membrane depolarization or increase in cytosolic Ca(2+) that mediates export of K(+). It is also activated by the concentration of cytosolic Mg(2+). Its activation dampens the excitatory events that elevate the cytosolic Ca(2+) concentration and/or depolarize the cell membrane. It therefore contributes to repolarization of the membrane potential. Plays a key role in controlling excitability in a number of systems, such as regulation of the contraction of smooth muscle, the tuning of hair cells in the cochlea, regulation of transmitter release, and innate immunity. In smooth muscles, its activation by high level of Ca(2+), caused by ryanodine receptors in the sarcoplasmic reticulum, regulates the membrane potential. In cochlea cells, its number and kinetic properties partly determine the characteristic frequency of each hair cell and thereby helps to establish a tonotopic map. Highly sensitive to both iberiotoxin (IbTx) and charybdotoxin (CTX). This chain is Calcium-activated potassium channel subunit alpha-1 (kcnma1), found in Xenopus laevis (African clawed frog).